The following is a 298-amino-acid chain: MSVQELSHPLIKDGWFREINNMWPGQAMTLKVKKVLYAGKSKYQDVLVFESETYGHVLVLDGAIQATERDEFSYQEMIAHLALNSHPNPKKVLVIGGGDGGVLREVVKHECVEEAILCDIDEDVIKVSKQYLPEMSAGFNHPKVKVHIGDGFKFLQDYQNTFDVIITDSSDPDGPAEALFQKPYFQLLSDALRGGGVITTQAECMWIHLGVISNVLTAVKTVFPNVRYAYTTIPTYPSGSIGFVVASKDASIDLSKPLRKWSPEEENKLCKYYNSEIHAASFVLPTFARDVVDKATSS.

The 236-residue stretch at 13–248 (DGWFREINNM…GSIGFVVASK (236 aa)) folds into the PABS domain. Glutamine 44 contributes to the S-adenosyl 3-(methylsulfanyl)propylamine binding site. Tyrosine 74 is a binding site for putrescine. Residues glutamine 75, aspartate 99, aspartate 119, 150 to 151 (DG), and aspartate 168 each bind S-adenosyl 3-(methylsulfanyl)propylamine. The active-site Proton acceptor is the aspartate 168. Putrescine-binding positions include 168–171 (DSSD) and tyrosine 236.

Belongs to the spermidine/spermine synthase family.

The enzyme catalyses S-adenosyl 3-(methylsulfanyl)propylamine + putrescine = S-methyl-5'-thioadenosine + spermidine + H(+). It functions in the pathway amine and polyamine biosynthesis; spermidine biosynthesis; spermidine from putrescine: step 1/1. The polypeptide is Spermidine synthase (Schizosaccharomyces pombe (strain 972 / ATCC 24843) (Fission yeast)).